The following is a 707-amino-acid chain: DCC-interacting protein 13-alpha (707 aa).

The tract at residues 1-428 is required for RAB5A binding; the sequence is MPGIDKLPIE…PPTARTSSSG (428 aa). Residues 3-268 form the BAR domain; the sequence is GIDKLPIEET…DPLYLPDPDP (266 aa). Positions 234-257 form a coiled coil; sequence QNVRREMDGDVETMQQTIEDLEVA. Residues 277 to 375 enclose the PH domain; the sequence is LTRKAGYLNA…WICTINNISK (99 aa). Disordered regions lie at residues 397–433, 466–490, and 636–707; these read AVTP…LGSE, GQAK…STKS, and EKQK…ESEA. Position 399 is a phosphothreonine (Thr399). Ser401 carries the post-translational modification Phosphoserine. Positions 403 to 414 match the F&amp;H motif; sequence SFQQRHESLRPG. Position 410 is a phosphoserine; by PKA (Ser410). The PID domain occupies 495-655; sequence SILHQLFIVR…EKQQKELSKQ (161 aa). The stretch at 620–670 forms a coiled coil; the sequence is LAKQIALHAELDRRASEKQKEIERVKEKQQKELSKQKQIEKDLEEQSRLIA. Over residues 636-666 the composition is skewed to basic and acidic residues; that stretch reads EKQKEIERVKEKQQKELSKQKQIEKDLEEQS. Low complexity predominate over residues 679-691; it reads GSEGQLVLSSSQS. Phosphoserine is present on residues Ser691 and Ser694. The segment covering 698-707 has biased composition (basic and acidic residues); sequence EEGKKRESEA.

In terms of assembly, homodimer. Binds RAB5A/Rab5 through an N-terminal domain. This interaction is essential for its recruitment to endosomal membranes as well as its role in cell proliferation. Binds DCC and the catalytic domain of the inactive form of AKT2 through its PID domain. Binds PIK3CA and subunits of the NuRD/MeCP1 complex. Interacts with OCRL and INPP5B. Interacts with NTRK2. Interacts with APPL2; interaction is independent of follicle stimulating hormone stimulation; interaction is decreased by adiponectin in a time-dependent manner. Forms a complex with APPL2 and RUVBL2. Forms a complex comprising APPL2, RUVBL2, CTNNB1, HDAC1 and HDAC2; interaction reduces interaction between CTNNB1, HDAC1, HDAC2 and RUVBL2 leading to the decrease of deacetylase activity of this complex; affects the recruitment of repressive complexes to the Wnt target genes. Interacts with ANXA2. Interacts with TGFBR1; interaction is TGF beta dependent; mediates trafficking of the TGFBR1 from the endosomes to the nucleus via microtubules in a TRAF6-dependent manner. Interacts with PRKCZ. Interacts with PIK3R1 and APPL2. Interacts with ADIPOR1; ADIPOQ enhances this interaction; inhibites adiponectin-stimulated binding of APPL2 to ADIPOR1. In terms of processing, phosphorylation at Ser-410 by PKA severely impairs binding to OCRL. In terms of tissue distribution, expressed in insulin-target tissues including skeletal muscle, liver, fat, and brain.

The protein resides in the early endosome membrane. It localises to the nucleus. The protein localises to the cytoplasm. It is found in the endosome. Its subcellular location is the cell projection. The protein resides in the ruffle. It localises to the cytoplasmic vesicle. The protein localises to the phagosome. Its function is as follows. Multifunctional adapter protein that binds to various membrane receptors, nuclear factors and signaling proteins to regulate many processes, such as cell proliferation, immune response, endosomal trafficking and cell metabolism. Regulates signaling pathway leading to cell proliferation through interaction with RAB5A and subunits of the NuRD/MeCP1 complex. Functions as a positive regulator of innate immune response via activation of AKT1 signaling pathway by forming a complex with APPL1 and PIK3R1. Inhibits Fc-gamma receptor-mediated phagocytosis through PI3K/Akt signaling in macrophages. Regulates TLR4 signaling in activated macrophages. Involved in trafficking of the TGFBR1 from the endosomes to the nucleus via microtubules in a TRAF6-dependent manner. Plays a role in cell metabolism by regulating adiponecting and insulin signaling pathways. Required for fibroblast migration through HGF cell signaling. Positive regulator of beta-catenin/TCF-dependent transcription through direct interaction with RUVBL2/reptin resulting in the relief of RUVBL2-mediated repression of beta-catenin/TCF target genes by modulating the interactions within the beta-catenin-reptin-HDAC complex. In Mus musculus (Mouse), this protein is DCC-interacting protein 13-alpha.